Reading from the N-terminus, the 607-residue chain is ATP-dependent RNA helicase-like protein DB10 (607 aa).

Residues 1 to 10 are compositionally biased toward polar residues; that stretch reads MAVVTASSAG. 2 disordered regions span residues 1–25 and 66–108; these read MAVV…KPWK and VFVS…DGTS. The WW domain occupies 18–52; that stretch reads PTLPKPWKGLVDGTTGFIYFWNPETNDTQYERPVP. Polar residues predominate over residues 89-98; it reads RGSNNKIARS. Over residues 99–108 the composition is skewed to basic and acidic residues; that stretch reads SSDRFHDGTS. The Q motif motif lies at 145-173; the sequence is TSFEATGFPSEIVREMHQAGFSAPTPIQA. A Helicase ATP-binding domain is found at 176 to 350; sequence WPIALQGRDI…ADLLVNSVQV (175 aa). ATP is bound at residue 189 to 196; sequence AKTGSGKT. The short motif at 298-301 is the DEAD box element; sequence DEAD. The Helicase C-terminal domain maps to 379 to 523; it reads RVEQILRSKE…CVPTELRDMA (145 aa). Residues 519 to 607 form a disordered region; the sequence is LRDMASRGGG…WSGKKSRFTD (89 aa). Residues 538-548 show a composition bias toward gly residues; that stretch reads SGPGGRGGRGG. Basic and acidic residues predominate over residues 562–574; that stretch reads GYDRGSRDSDRYG.

It belongs to the DEAD box helicase family.

The catalysed reaction is ATP + H2O = ADP + phosphate + H(+). The protein is ATP-dependent RNA helicase-like protein DB10 of Nicotiana sylvestris (Wood tobacco).